The chain runs to 194 residues: Probable GTP-binding protein EngB (194 aa).

Positions 22 to 194 constitute an EngB-type G domain; that stretch reads DLPEYALAGR…AWQFIKEGME (173 aa). Residues 30–37, 57–61, 75–78, 142–145, and 174–176 each bind GTP; these read GRSNVGKS, GKTQT, DVPG, TKAD, and FSS. Ser37 and Thr59 together coordinate Mg(2+).

This sequence belongs to the TRAFAC class TrmE-Era-EngA-EngB-Septin-like GTPase superfamily. EngB GTPase family. The cofactor is Mg(2+).

Its function is as follows. Necessary for normal cell division and for the maintenance of normal septation. This is Probable GTP-binding protein EngB from Listeria innocua serovar 6a (strain ATCC BAA-680 / CLIP 11262).